The primary structure comprises 254 residues: uncharacterized protein (254 aa).

Positions 1–22 are cleaved as a signal peptide; it reads MKRLKKIVLCISFLFLTIFIGG. Cys23 is lipidated: N-palmitoyl cysteine. The S-diacylglycerol cysteine moiety is linked to residue Cys23.

This sequence belongs to the staphylococcal tandem lipoprotein family.

The protein localises to the cell membrane. This is an uncharacterized protein from Staphylococcus aureus (strain MSSA476).